The sequence spans 592 residues: Transcription factor MYC3 (592 aa).

The tract at residues 82-141 (STGDNTVILGWGDGYYKGEEDKEKKKNNTNTAEQEHRKRVIRELNSLISGGIGVSDESND) is JAZ-interaction domain. 4 disordered regions span residues 261 to 313 (ENDP…VENQ), 341 to 361 (CGNE…NDEG), 393 to 422 (EPPE…AERQ), and 465 to 508 (QQAE…STAS). Residues 278–293 (SPARVNNGNNSNSNSK) are compositionally biased toward low complexity. Residues 294–306 (SDSHQISKLEKND) show a composition bias toward basic and acidic residues. Residues 352-361 (VSKGSNNDEG) show a composition bias toward polar residues. The segment covering 398-407 (KPRKRGRKPA) has biased composition (basic residues). Basic and acidic residues-rich tracts occupy residues 408-422 (NGRE…AERQ) and 468-482 (ESDK…DGMS). Residues 411–460 (EEPLNHVEAERQRREKLNQRFYSLRAVVPNVSKMDKASLLGDAISYINEL) form the bHLH domain.

As to quaternary structure, homo- and heterodimer. Interacts with MYB28, MYB29, MYB34, MYB51, MYB76, MYB122, MYC2, MYC4, AFPH2/NINJA and the JAZ repressors TIFY10A/JAZ1, TIFY10B/JAZ2, TIFY6B/JAZ3, TIFY11A/JAZ5, TIFY11B/JAZ6, TIFY5B/JAZ7, TIFY5A/JAZ8, TIFY7/JAZ9, TIFY9/JAZ10, TIFY3A/JAZ11 and TIFY3B/JAZ12. As to expression, constitutively expressed in roots, stems, leaves, flowers, and seedlings.

It is found in the nucleus. In terms of biological role, transcription factor involved in tryptophan, jasmonic acid (JA) and other stress-responsive gene regulation. With MYC2 and MYC4, controls additively subsets of JA-dependent responses. Can form complexes with all known glucosinolate-related MYBs to regulate glucosinolate biosynthesis. Binds to the G-box (5'-CACGTG-3') of promoters. Activates multiple TIFY/JAZ promoters. The protein is Transcription factor MYC3 (MYC3) of Arabidopsis thaliana (Mouse-ear cress).